Consider the following 432-residue polypeptide: CBL-interacting serine/threonine-protein kinase 17 (432 aa).

One can recognise a Protein kinase domain in the interval 11–266; the sequence is YELGRTLGEG…IAGIKAHDWF (256 aa). ATP-binding positions include 17–25 and lysine 40; that span reads LGEGNSAKV. Catalysis depends on aspartate 134, which acts as the Proton acceptor. Positions 152-181 are activation loop; it reads DFGLSALSQHYREDGLLHTTCGSPNYVAPE. Serine 156 is modified (phosphoserine). Threonine 170 is subject to Phosphothreonine. The region spanning 301 to 325 is the NAF domain; that stretch reads DSPTIINAFQLIGMSSFLDLSGFFE. Residues 331–360 are PPI; sequence ERQIRFTSNSLAKDLLENIETIFTEMGFCL.

It belongs to the protein kinase superfamily. CAMK Ser/Thr protein kinase family. SNF1 subfamily. As to quaternary structure, interacts with CBL1. Requires Mn(2+) as cofactor.

The enzyme catalyses L-seryl-[protein] + ATP = O-phospho-L-seryl-[protein] + ADP + H(+). The catalysed reaction is L-threonyl-[protein] + ATP = O-phospho-L-threonyl-[protein] + ADP + H(+). CIPK serine-threonine protein kinases interact with CBL proteins. Binding of a CBL protein to the regulatory NAF domain of CIPK protein lead to the activation of the kinase in a calcium-dependent manner. The protein is CBL-interacting serine/threonine-protein kinase 17 (CIPK17) of Arabidopsis thaliana (Mouse-ear cress).